Reading from the N-terminus, the 145-residue chain is Deoxyuridine 5'-triphosphate nucleotidohydrolase (145 aa).

Belongs to the dUTPase family. The cofactor is Mg(2+).

The catalysed reaction is dUTP + H2O = dUMP + diphosphate + H(+). In terms of biological role, this enzyme is involved in nucleotide metabolism: it produces dUMP, the immediate precursor of thymidine nucleotides and it decreases the intracellular concentration of dUTP so that uracil cannot be incorporated into DNA. This Fowlpox virus (strain NVSL) (FPV) protein is Deoxyuridine 5'-triphosphate nucleotidohydrolase (DUT).